The following is a 394-amino-acid chain: 1-deoxy-D-xylulose 5-phosphate reductoisomerase (394 aa).

Residues Thr6, Gly7, Ser8, Ile9, Ala32, and Asn124 each coordinate NADPH. Lys125 is a 1-deoxy-D-xylulose 5-phosphate binding site. Residue Glu126 participates in NADPH binding. Residue Asp148 coordinates Mn(2+). 1-deoxy-D-xylulose 5-phosphate contacts are provided by Ser149, Glu150, Ser174, and His197. Glu150 contacts Mn(2+). Gly203 contributes to the NADPH binding site. 4 residues coordinate 1-deoxy-D-xylulose 5-phosphate: Ser210, Asn215, Lys216, and Glu219. A Mn(2+)-binding site is contributed by Glu219.

Belongs to the DXR family. It depends on Mg(2+) as a cofactor. Mn(2+) is required as a cofactor.

It catalyses the reaction 2-C-methyl-D-erythritol 4-phosphate + NADP(+) = 1-deoxy-D-xylulose 5-phosphate + NADPH + H(+). It participates in isoprenoid biosynthesis; isopentenyl diphosphate biosynthesis via DXP pathway; isopentenyl diphosphate from 1-deoxy-D-xylulose 5-phosphate: step 1/6. In terms of biological role, catalyzes the NADPH-dependent rearrangement and reduction of 1-deoxy-D-xylulose-5-phosphate (DXP) to 2-C-methyl-D-erythritol 4-phosphate (MEP). The sequence is that of 1-deoxy-D-xylulose 5-phosphate reductoisomerase from Streptomyces avermitilis (strain ATCC 31267 / DSM 46492 / JCM 5070 / NBRC 14893 / NCIMB 12804 / NRRL 8165 / MA-4680).